Consider the following 456-residue polypeptide: Glycerol-3-phosphate acyltransferase 4 (456 aa).

Positions 1–37 (MFLLLPFDSLIVNLLGISLTVLFTLLLVFIIVPAIFG) are cleaved as a signal peptide. A run of 2 helical transmembrane segments spans residues 156–176 (ISLR…CFLL) and 180–200 (IALA…VGYL). A glycan (N-linked (GlcNAc...) asparagine) is linked at asparagine 247. Residues 248–253 (HTSPID) carry the HXXXXD motif motif. Asparagine 327, asparagine 328, and asparagine 362 each carry an N-linked (GlcNAc...) asparagine glycan.

Belongs to the 1-acyl-sn-glycerol-3-phosphate acyltransferase family. In terms of tissue distribution, highly expressed in testis.

The protein localises to the endoplasmic reticulum membrane. It catalyses the reaction sn-glycerol 3-phosphate + an acyl-CoA = a 1-acyl-sn-glycero-3-phosphate + CoA. The catalysed reaction is dodecanoyl-CoA + sn-glycerol 3-phosphate = 1-dodecanoyl-sn-glycerol 3-phosphate + CoA. It carries out the reaction sn-glycerol 3-phosphate + hexadecanoyl-CoA = 1-hexadecanoyl-sn-glycero-3-phosphate + CoA. The enzyme catalyses sn-glycerol 3-phosphate + octadecanoyl-CoA = 1-octadecanoyl-sn-glycero-3-phosphate + CoA. It catalyses the reaction sn-glycerol 3-phosphate + (9Z)-octadecenoyl-CoA = 1-(9Z-octadecenoyl)-sn-glycero-3-phosphate + CoA. The catalysed reaction is (9Z,12Z)-octadecadienoyl-CoA + sn-glycerol 3-phosphate = 1-(9Z,12Z)-octadecadienoyl-sn-glycero-3-phosphate + CoA. It functions in the pathway phospholipid metabolism; CDP-diacylglycerol biosynthesis; CDP-diacylglycerol from sn-glycerol 3-phosphate: step 1/3. Converts glycerol-3-phosphate to 1-acyl-sn-glycerol-3-phosphate (lysophosphatidic acid or LPA) by incorporating an acyl moiety at the sn-1 position of the glycerol backbone. Active against both saturated and unsaturated long-chain fatty acyl-CoAs. Protects cells against lipotoxicity. This is Glycerol-3-phosphate acyltransferase 4 from Mus musculus (Mouse).